A 501-amino-acid chain; its full sequence is Pyruvate dehydrogenase protein X component, mitochondrial (501 aa).

Residues 1–53 constitute a mitochondrion transit peptide; that stretch reads MAASWRLHCNQPLLRYLLGFSSRRSLGLAQGAAAWPVDRGASWRWFHSTQLLQ. The 77-residue stretch at 56 to 132 folds into the Lipoyl-binding domain; that stretch reads PIKVLMPSLS…QLGSLIALMV (77 aa). Lys97 carries the N6-lipoyllysine modification. The segment at 145 to 176 is disordered; sequence KDVSAPPPVSKPPAPTQPSPQPQIPCPARKEH. The segment covering 149 to 169 has biased composition (pro residues); that stretch reads APPPVSKPPAPTQPSPQPQIP. The region spanning 183-220 is the Peripheral subunit-binding (PSBD) domain; the sequence is RLSPAARNILEKHSLDASQGTATGPRGIFTKEDALKLV. Lys194 is subject to N6-acetyllysine. Phosphoserine is present on Ser196. Positions 228–256 are disordered; that stretch reads ITESRPASAPPPSLSASVPPQATAGPSYP. An N6-succinyllysine modification is found at Lys394.

The protein belongs to the 2-oxoacid dehydrogenase family. As to quaternary structure, part of the inner core of the multimeric pyruvate dehydrogenase complex that is composed of about 48 DLAT and 12 PDHX molecules. This core binds multiple copies of pyruvate dehydrogenase (subunits PDH1A and PDHB, E1), dihydrolipoamide acetyltransferase (DLAT, E2) and lipoamide dehydrogenase (DLD, E3). Interacts with SIRT4. Interacts with DLD. In terms of processing, delipoylated at Lys-97 by SIRT4, delipoylation decreases the PHD complex activity.

Its subcellular location is the mitochondrion matrix. In terms of biological role, required for anchoring dihydrolipoamide dehydrogenase (E3) to the dihydrolipoamide transacetylase (E2) core of the pyruvate dehydrogenase complexes of eukaryotes. This specific binding is essential for a functional PDH complex. The chain is Pyruvate dehydrogenase protein X component, mitochondrial (Pdhx) from Mus musculus (Mouse).